We begin with the raw amino-acid sequence, 115 residues long: Type 3 secretion system chaperone YscG (115 aa).

The protein belongs to the YscG family. Component of the heterodimeric YscE-YscG chaperone. The YscE-YscG chaperone forms a stable ternary complex with YscF/SctF.

Its subcellular location is the cytoplasm. Functionally, chaperone of the type III secretion system (T3SS), also called injectisome, which is used to inject bacterial effector proteins into eukaryotic host cells. Along with YscE, prevents premature polymerization of the YscF/SctF needle protein within the cytoplasm. Required for Yop secretion. The chain is Type 3 secretion system chaperone YscG from Yersinia enterocolitica.